The chain runs to 190 residues: Peptidyl-tRNA hydrolase (190 aa).

Tyr-14 is a binding site for tRNA. Catalysis depends on His-19, which acts as the Proton acceptor. The tRNA site is built by Tyr-64 and Asn-66.

The protein belongs to the PTH family. As to quaternary structure, monomer.

The protein resides in the cytoplasm. The enzyme catalyses an N-acyl-L-alpha-aminoacyl-tRNA + H2O = an N-acyl-L-amino acid + a tRNA + H(+). Hydrolyzes ribosome-free peptidyl-tRNAs (with 1 or more amino acids incorporated), which drop off the ribosome during protein synthesis, or as a result of ribosome stalling. Functionally, catalyzes the release of premature peptidyl moieties from peptidyl-tRNA molecules trapped in stalled 50S ribosomal subunits, and thus maintains levels of free tRNAs and 50S ribosomes. This is Peptidyl-tRNA hydrolase from Rhodopirellula baltica (strain DSM 10527 / NCIMB 13988 / SH1).